Here is a 1241-residue protein sequence, read N- to C-terminus: uncharacterized protein (1241 aa).

Positions 21 to 49 (ILNDNVREINIAKKEIKQLREYVGILQQN) form a coiled coil. A run of 3 helical transmembrane segments spans residues 261-281 (VNAI…FVLG), 918-938 (AVVG…GLVA), and 947-967 (GHIV…VIGG). Residues 1005 to 1028 (THIGKEDSNNGVSTSTNKRSIGKA) form a disordered region. Residues 1013–1028 (NNGVSTSTNKRSIGKA) show a composition bias toward polar residues.

The protein localises to the host membrane. This is an uncharacterized protein from Diadromus pulchellus (Parasitic wasp).